Consider the following 562-residue polypeptide: Arginine--tRNA ligase (562 aa).

Positions 129 to 139 match the 'HIGH' region motif; it reads ANPTGPLHVGH.

Belongs to the class-I aminoacyl-tRNA synthetase family. Monomer.

It localises to the cytoplasm. It catalyses the reaction tRNA(Arg) + L-arginine + ATP = L-arginyl-tRNA(Arg) + AMP + diphosphate. This is Arginine--tRNA ligase from Xylella fastidiosa (strain M23).